A 247-amino-acid polypeptide reads, in one-letter code: Malonyl-[acyl-carrier protein] O-methyltransferase (247 aa).

This sequence belongs to the methyltransferase superfamily.

The catalysed reaction is malonyl-[ACP] + S-adenosyl-L-methionine = malonyl-[ACP] methyl ester + S-adenosyl-L-homocysteine. The protein operates within cofactor biosynthesis; biotin biosynthesis. Functionally, converts the free carboxyl group of a malonyl-thioester to its methyl ester by transfer of a methyl group from S-adenosyl-L-methionine (SAM). It allows to synthesize pimeloyl-ACP via the fatty acid synthetic pathway. This Buchnera aphidicola subsp. Baizongia pistaciae (strain Bp) protein is Malonyl-[acyl-carrier protein] O-methyltransferase.